The following is a 349-amino-acid chain: MTSPEDTAGVEAALAAEGFSPTDVRAVMCMTESDGFGRGYASLAFAHAFAPALGCPPEDVAQQIPMIMIGGCSGLVTPYAAVFVDDPASSWVTDGSGGGLSIGVTTTATLNPLDVGTPAMVDAVADAVRSAMAAAGIDKVADVHNVQIKTPWPSSAALLDGPLSGLDAGSVGAMARAAGALGVAVALGEVSRADITADVFLRDPNLRSDVASVSAGTERVDAAVLVMGNSPTSASPYRIGHGVLRDGIDPHGVLDALRAVGIDSGWPFTADTTPVEHVFLKSAVDGTDECRGRRHVLRTDYLGPYSWLLGKAVVHATVASIVGDPMMQVSGGGEHQGPPGGGTVAVIAR.

Positions 1–90 (MTSPEDTAGV…AVFVDDPASS (90 aa)) are RU A. Arg-38 is a substrate binding site. Residues 99-231 (GLSIGVTTTA…AAVLVMGNSP (133 aa)) form an RU B region. Lys-149 is an active-site residue. Substrate-binding positions include Arg-176, 214-215 (SA), Lys-311, and 330-331 (SG). Residue Ser-214 is the Nucleophile of the active site. The interval 237–349 (YRIGHGVLRD…GGGTVAVIAR (113 aa)) is RU C.

The protein belongs to the cyclic amide hydrolase (CyAH) family. Homotetramer.

In terms of biological role, cyclic amide hydrolase of unknown substrate specificity. Catalyzes the hydrolytic ring-opening of a cyclic amide. Does not act on cyanuric acid nor barbituric acid. This chain is Cyclic amide hydrolase, found in Rhodococcus sp.